A 301-amino-acid chain; its full sequence is MFFREDKSVAFRLRSAALSGCATGQSDAVTDPLSVLEVSQTETREALMLFVSYNETGASVTIFTPELVARLSKSYRFLRVEAPHSAYTLSPEARERNRLLFSEYEVDGLPFLVLQSAQGDAYFAQRIHSTLSSEQELWALIRSADASRKKVLAARDRIAQTEAAEKAIAIDAFLKTVRYPRSARYDALRKEALQADHENVSGLHGDYMFHLARRRAEKFIKQENLVAAGNAYKDLAQSPFLSASQKQEAWYLTAYTYALSEKVSTEDVVACLRKAVAAHPHAARVAQIKQTIKKLLTERGI.

Residues 1–28 (MFFREDKSVAFRLRSAALSGCATGQSDA) form the signal peptide.

This is an uncharacterized protein from Treponema pallidum (strain Nichols).